Here is a 102-residue protein sequence, read N- to C-terminus: Large ribosomal subunit protein bL21 (102 aa).

Belongs to the bacterial ribosomal protein bL21 family. Part of the 50S ribosomal subunit. Contacts protein L20.

Its function is as follows. This protein binds to 23S rRNA in the presence of protein L20. The sequence is that of Large ribosomal subunit protein bL21 from Ehrlichia canis (strain Jake).